Reading from the N-terminus, the 471-residue chain is Regulator of microtubule dynamics protein 3 (471 aa).

Over 1 to 9 the chain is Mitochondrial intermembrane; the sequence is MSSLGTLGG. A helical membrane pass occupies residues 10 to 32; the sequence is ARAGLGLLLGTAAGLGFLCALYS. Residues 33–471 are Cytoplasmic-facing; sequence QRWKRTQRRG…LEELEVILGE (439 aa). The segment at 39-70 is disordered; that stretch reads QRRGQSQSQSNSLDYTQTSEPGRQVRPLRAAP. A compositionally biased stretch (low complexity) spans 41–50; the sequence is RGQSQSQSNS. Phosphoserine is present on residues Ser44, Ser46, Ser50, and Ser57. The stretch at 90–123 forms a coiled coil; the sequence is LDRLEFVLTSLVALRREVEELRSSLQGLAGQIVG. The short motif at 156-162 is the FFAT element; that stretch reads VYFTAAS. At Thr159 the chain carries Phosphothreonine. A disordered region spans residues 169–206; it reads AESEGGYTTANAESDYERDSERESDGDGEDEVSCETVK. Residues Ser182, Ser192, Ser212, and Ser233 each carry the phosphoserine modification. Residues 183-193 show a composition bias toward basic and acidic residues; sequence DYERDSERESD.

Belongs to the RMDN family. As to quaternary structure, interacts with PTPN2. Interacts with microtubules. Interacts with VAPB. Interacts (via FFAT motif) with MOSPD2 (via MSP domain). Interacts (via phosphorylated FFAT motif) with MOSPD2, VAPA and VAPB. Post-translationally, phosphorylation at Thr-160 of the FFAT motif activates interaction with MOSPD2, VAPA and VAPB.

The protein localises to the mitochondrion outer membrane. Its subcellular location is the cytoplasm. It localises to the nucleus. The protein resides in the cytoskeleton. It is found in the spindle. The protein localises to the spindle pole. Its function is as follows. Involved in cellular calcium homeostasis regulation. May participate in differentiation and apoptosis of keratinocytes. Overexpression induces apoptosis. The protein is Regulator of microtubule dynamics protein 3 of Bos taurus (Bovine).